The chain runs to 464 residues: Serine--tRNA synthetase-like protein Slimp (464 aa).

The protein belongs to the class-II aminoacyl-tRNA synthetase family. Type-1 seryl-tRNA synthetase subfamily.

The protein localises to the mitochondrion. Functionally, essential protein which may play a role in mitochondrial morphogenesis and function. Has transfer RNA (tRNA)-binding activity and can bind tRNA(Ser) but does not have serine--tRNA ligase activity and does not bind ATP. The sequence is that of Serine--tRNA synthetase-like protein Slimp from Drosophila melanogaster (Fruit fly).